The primary structure comprises 397 residues: MSKIIAINAGSSSLKFQLFEMPSETVLTKGLVERIGLEDSIFTITVDGEKQKEITNIPDHAVAVNMLLKKLTENGIVKSLDEIGGIGHRVVHGGEKFADSVLITDEVLADIEELSDLAPLHNPANVVGIKAFQEVLPNVPAVAVFDTAFHQTMPESAFLYSLPYEYYEKFGIRKYGFHGTSHKYVTERAAELLGRPLESLSLLSCHLGNGASIAAVEGGKSIDTSMGFTPLAGVTMGTRSGNIDPALIPYIMEKTGQTVEEVVSVLNKKSGMLGLTGYSSDLRDIIAKEEEGDHRAKVALDVFVSRIHKYIGSYTARMKGVDAIIFTAGVGENSAIIRERVLEGLEYMGVYFDAKRNNVFGEEAFINFPHSPVKIIVIPTDEEVMIARDVLRLGNID.

Asn-8 is a Mg(2+) binding site. Lys-15 contacts ATP. Substrate is bound at residue Arg-89. The Proton donor/acceptor role is filled by Asp-146. Residues 206–210 (HLGNG), 281–283 (DLR), and 329–333 (GVGEN) each bind ATP. A Mg(2+)-binding site is contributed by Glu-382.

This sequence belongs to the acetokinase family. Homodimer. It depends on Mg(2+) as a cofactor. The cofactor is Mn(2+).

It localises to the cytoplasm. The catalysed reaction is acetate + ATP = acetyl phosphate + ADP. It participates in metabolic intermediate biosynthesis; acetyl-CoA biosynthesis; acetyl-CoA from acetate: step 1/2. Functionally, catalyzes the formation of acetyl phosphate from acetate and ATP. Can also catalyze the reverse reaction. The protein is Acetate kinase of Bacillus thuringiensis subsp. konkukian (strain 97-27).